The following is a 311-amino-acid chain: Homeobox-leucine zipper protein HOX1 (311 aa).

Disordered stretches follow at residues 29-69 (AGGA…SDHR) and 97-160 (AETT…KKLR). The segment covering 119–145 (SSPNSTLSSLSGKRGAPSAATAAAAAA) has biased composition (low complexity). The homeobox DNA-binding region spans 154-213 (GSRKKLRLSKDQAAVLEDTFKEHNTLNPKQKAALARQLNLKPRQVEVWFQNRRARTKLKQ). The segment at 212-256 (KQTEVDCELLKRCCETLTDENRRLHRELQELRALKLATAAAAPHH) is leucine-zipper. Positions 279 to 311 (SAATTTRNNSGAAPARPVPTRPWPPAAAQRSSA) are disordered. The segment covering 280 to 289 (AATTTRNNSG) has biased composition (polar residues). The span at 294–303 (RPVPTRPWPP) shows a compositional bias: pro residues.

It belongs to the HD-ZIP homeobox family. Class II subfamily. Homodimer. May form a heterodimer with HOX2, HOX3 or HOX7. Expressed in root provascular and vascular cylinder, provascular and vascular strands of leaves, provascular and vascular strands of the whole panicle, in mature embryo provascular bundles of scutellum and embryonic axis and provascular and vascular strands of young immature spikelet organs. Expressed in differentiating and differentiated xylem and phloem elements, and in outer and inner bundle sheath cells of all vascular bundles. Expressed in auricles, ligules, culm, guard cells brac hairs and pollen.

The protein resides in the nucleus. Functionally, probable transcription repressor involved leaf development. Binds to the DNA sequence 5'-CAAT[GC]ATTG-3'. May act as a regulatory switch to specify provascular cell fate. The polypeptide is Homeobox-leucine zipper protein HOX1 (HOX1) (Oryza sativa subsp. japonica (Rice)).